The chain runs to 130 residues: Small ribosomal subunit protein uS9 (130 aa).

The protein belongs to the universal ribosomal protein uS9 family.

The chain is Small ribosomal subunit protein uS9 from Bordetella bronchiseptica (strain ATCC BAA-588 / NCTC 13252 / RB50) (Alcaligenes bronchisepticus).